The chain runs to 495 residues: Tripartite motif-containing protein 5 (495 aa).

Position 2 is an N-acetylalanine (A2). Residues 15–60 (CPICLELLTEPLSLHCGHSFCQACITANHKKSMLYKEGERSCPVCR) form an RING-type zinc finger. S87 is subject to Phosphoserine. The B box-type zinc-finger motif lies at 92–133 (QKVDHCARHGEKLLLFCQEDSKVICWLCERSQEHRGHHTFLM). Positions 97, 100, 119, and 125 each coordinate Zn(2+). Residues 137 to 223 (AQEYHVKLQT…KSLTKSETKM (87 aa)) are a coiled coil. A required for interaction with GABARAP and for autophagy region spans residues 187–200 (FEQLREILDREESN). The B30.2/SPRY domain occupies 283 to 495 (LKGMLDMFRE…VPMTLCSPSS (213 aa)).

The protein belongs to the TRIM/RBCC family. Can form homodimers and homotrimers. In addition to lower-order dimerization, also exhibits a higher-order multimerization and both low- and high-order multimerizations are essential for its restriction activity. Interacts with BTBD1 and BTBD2. Interacts with PSMC4, PSMC5, PSMD7 and HSPA8/HSC70. Interacts (via B30.2/SPRY domain) with HSPA1A/B. Interacts with PSMC2, MAP3K7/TAK1, TAB2 and TAB3. Interacts with SQSTM1. Interacts with TRIM6 and TRIM34. Interacts with ULK1 (phosphorylated form), GABARAP, GABARAPL1, GABARAPL2, MAP1LC3A, MAP1LC3C and BECN1. In terms of processing, degraded in a proteasome-independent fashion in the absence of viral infection but in a proteasome-dependent fashion following exposure to restriction sensitive virus. Autoubiquitinated in a RING finger- and UBE2D2-dependent manner. Monoubiquitinated by TRIM21. Deubiquitinated by Yersinia YopJ. Ubiquitination may not lead to proteasomal degradation.

It localises to the cytoplasm. Its subcellular location is the nucleus. It carries out the reaction S-ubiquitinyl-[E2 ubiquitin-conjugating enzyme]-L-cysteine + [acceptor protein]-L-lysine = [E2 ubiquitin-conjugating enzyme]-L-cysteine + N(6)-ubiquitinyl-[acceptor protein]-L-lysine.. It functions in the pathway protein modification; protein ubiquitination. Its function is as follows. Capsid-specific restriction factor that prevents infection from non-host-adapted retroviruses. Blocks viral replication early in the life cycle, after viral entry but before reverse transcription. In addition to acting as a capsid-specific restriction factor, also acts as a pattern recognition receptor that activates innate immune signaling in response to the retroviral capsid lattice. Binding to the viral capsid triggers its E3 ubiquitin ligase activity, and in concert with the heterodimeric ubiquitin conjugating enzyme complex UBE2V1-UBE2N (also known as UBC13-UEV1A complex) generates 'Lys-63'-linked polyubiquitin chains, which in turn are catalysts in the autophosphorylation of the MAP3K7/TAK1 complex (includes TAK1, TAB2, and TAB3). Activation of the MAP3K7/TAK1 complex by autophosphorylation results in the induction and expression of NF-kappa-B and MAPK-responsive inflammatory genes, thereby leading to an innate immune response in the infected cell. Plays a role in regulating autophagy through activation of autophagy regulator BECN1 by causing its dissociation from its inhibitors BCL2 and TAB2. The sequence is that of Tripartite motif-containing protein 5 (TRIM5) from Macaca nemestrina (Pig-tailed macaque).